The chain runs to 95 residues: MKSSLIKNTVNKKVKFKKGDLVQILSGSDKKKTGEIIAIIHKTSKVIVKGINLKVEASKDLSKKVETGEITKFEAPIHSSNVMLFSQKNNISSRF.

The protein belongs to the universal ribosomal protein uL24 family. Part of the 50S ribosomal subunit.

It localises to the plastid. It is found in the chloroplast. In terms of biological role, one of two assembly initiator proteins, it binds directly to the 5'-end of the 23S rRNA, where it nucleates assembly of the 50S subunit. In Porphyra purpurea (Red seaweed), this protein is Large ribosomal subunit protein uL24c (rpl24).